The following is a 216-amino-acid chain: Ribosomal RNA small subunit methyltransferase G (216 aa).

S-adenosyl-L-methionine contacts are provided by residues Gly73, Leu78, 124–125 (AE), and Arg139.

Belongs to the methyltransferase superfamily. RNA methyltransferase RsmG family.

Its subcellular location is the cytoplasm. Its function is as follows. Specifically methylates the N7 position of guanine in position 518 of 16S rRNA. In Paenarthrobacter aurescens (strain TC1), this protein is Ribosomal RNA small subunit methyltransferase G.